The primary structure comprises 123 residues: Small ribosomal subunit protein uS12 (123 aa).

Residues 1–29 (MPTINQLVRKGREPQKAKSKVPAMEQNPQ) form a disordered region. Position 89 is a 3-methylthioaspartic acid (Asp-89).

The protein belongs to the universal ribosomal protein uS12 family. As to quaternary structure, part of the 30S ribosomal subunit. Contacts proteins S8 and S17. May interact with IF1 in the 30S initiation complex.

In terms of biological role, with S4 and S5 plays an important role in translational accuracy. Its function is as follows. Interacts with and stabilizes bases of the 16S rRNA that are involved in tRNA selection in the A site and with the mRNA backbone. Located at the interface of the 30S and 50S subunits, it traverses the body of the 30S subunit contacting proteins on the other side and probably holding the rRNA structure together. The combined cluster of proteins S8, S12 and S17 appears to hold together the shoulder and platform of the 30S subunit. This is Small ribosomal subunit protein uS12 from Novosphingobium aromaticivorans (strain ATCC 700278 / DSM 12444 / CCUG 56034 / CIP 105152 / NBRC 16084 / F199).